The chain runs to 155 residues: Molybdopterin synthase catalytic subunit 1 (155 aa).

Residues 101–102 (HR), K117, and 124–126 (KKE) contribute to the substrate site.

Belongs to the MoaE family. MOCS2B subfamily. Heterotetramer; composed of 2 small (MOCS2A) and 2 large (MOCS2B) subunits.

It is found in the cytoplasm. The enzyme catalyses 2 [molybdopterin-synthase sulfur-carrier protein]-C-terminal-Gly-aminoethanethioate + cyclic pyranopterin phosphate + H2O = molybdopterin + 2 [molybdopterin-synthase sulfur-carrier protein]-C-terminal Gly-Gly + 2 H(+). The protein operates within cofactor biosynthesis; molybdopterin biosynthesis. Functionally, catalytic subunit of the molybdopterin synthase complex, a complex that catalyzes the conversion of precursor Z into molybdopterin. Acts by mediating the incorporation of 2 sulfur atoms from thiocarboxylated MOCS2A into precursor Z to generate a dithiolene group. The protein is Molybdopterin synthase catalytic subunit 1 of Aedes aegypti (Yellowfever mosquito).